We begin with the raw amino-acid sequence, 467 residues long: 55 kDa erythrocyte membrane protein (467 aa).

A PDZ domain is found at 73–154; sequence EVAFEKNQSE…VVTMKIIPRP (82 aa). The region spanning 160–230 is the SH3 domain; it reads PCEMYMRGQF…PSPELQEWRA (71 aa). Residues 283 to 452 enclose the Guanylate kinase-like domain; the sequence is RKTLVLIGAP…SVKIVEEALE (170 aa).

Belongs to the MAGUK family. Post-translationally, extensively palmitoylated.

The protein localises to the membrane. May play a role in the regulation of neutrophil polarization. This Takifugu rubripes (Japanese pufferfish) protein is 55 kDa erythrocyte membrane protein (mpp1).